Here is a 176-residue protein sequence, read N- to C-terminus: Peroxiredoxin AHP1 (176 aa).

Ser2 carries the N-acetylserine modification. The Thioredoxin domain occupies 9–176; it reads FPAGDYKFQY…SSVESVLAHL (168 aa). The residue at position 28 (Ser28) is a Phosphoserine. Lys32 is covalently cross-linked (Glycyl lysine isopeptide (Lys-Gly) (interchain with G-Cter in URM1)). Residue Lys48 forms a Glycyl lysine isopeptide (Lys-Gly) (interchain with G-Cter in ubiquitin); alternate linkage. A Glycyl lysine isopeptide (Lys-Gly) (interchain with G-Cter in URM1); alternate cross-link involves residue Lys48. Phosphoserine is present on Ser59. The active-site Cysteine sulfenic acid (-SOH) intermediate is Cys62. The residue at position 62 (Cys62) is a Cysteine persulfide. Lys79 participates in a covalent cross-link: Glycyl lysine isopeptide (Lys-Gly) (interchain with G-Cter in URM1). Lys81 is covalently cross-linked (Glycyl lysine isopeptide (Lys-Gly) (interchain with G-Cter in ubiquitin); alternate). Lys81 is covalently cross-linked (Glycyl lysine isopeptide (Lys-Gly) (interchain with G-Cter in URM1); alternate). Residue Lys107 forms a Glycyl lysine isopeptide (Lys-Gly) (interchain with G-Cter in URM1) linkage. A Glycyl lysine isopeptide (Lys-Gly) (interchain with G-Cter in ubiquitin) cross-link involves residue Lys113. Position 116 is a phosphoserine (Ser116). Cys120 is subject to Cysteine persulfide. Residue Lys124 forms a Glycyl lysine isopeptide (Lys-Gly) (interchain with G-Cter in URM1) linkage. A Glycyl lysine isopeptide (Lys-Gly) (interchain with G-Cter in URM1); alternate cross-link involves residue Lys156. Residue Lys156 forms a Glycyl lysine isopeptide (Lys-Gly) (interchain with G-Cter in SUMO); alternate linkage.

This sequence belongs to the peroxiredoxin family. Prx5 subfamily. In terms of assembly, homodimer; disulfide-linked, upon oxidation. Post-translationally, conjugated to URM1, a ubiquitin-like protein, in response to oxidative stresses. The attachment of URM1 to lysine residues exclusively depends on the presence of a peroxidatic cysteine in the target protein, with low specificity for the particular residue, motif, or structural context at which urmylation can occur. The URM1-conjugation reaction is mechanistically and directly coupled to the process of cysteine persulfidation, transfering the sulfur atom of the URM1 thiocarboxyl group to redox-active cysteine residues in the target protein if it is exposed to oxidative conditions. Persulfidated on specific redox-active cysteine residues. Persulfidation (also called protein S-sulfhydration) may provide a molecular mechanism that enables cells to protect vulnerable cysteine residues from reactive oxygen species (ROS) under stress conditions.

It localises to the cytoplasm. The enzyme catalyses a hydroperoxide + [thioredoxin]-dithiol = an alcohol + [thioredoxin]-disulfide + H2O. In terms of biological role, thiol-specific peroxidase that catalyzes the reduction of hydrogen peroxide and organic hydroperoxides to water and alcohols, respectively. Plays a role in cell protection against oxidative stress by detoxifying peroxides and as sensor of hydrogen peroxide-mediated signaling events. Preferentially eliminates organic peroxides rather than hydrogen peroxide. Relays alkyl hydroperoxides as a signal to the transcription factor CAD1/YAP2 by inducing the formation of intramolecular disulfide bonds in CAD1, which causes its nuclear accumulation and activation. Involved in cellular Mn(2+) homeostasis. The protein is Peroxiredoxin AHP1 of Saccharomyces cerevisiae (strain ATCC 204508 / S288c) (Baker's yeast).